We begin with the raw amino-acid sequence, 446 residues long: Trigger factor (446 aa).

In terms of domain architecture, PPIase FKBP-type spans 161–246 (GDRLTIDFKG…VSKVERSELP (86 aa)). A disordered region spans residues 422–446 (VSYEDAVKPRTAPAEQAEDGEQSAE). Positions 437 to 446 (QAEDGEQSAE) are enriched in acidic residues.

This sequence belongs to the FKBP-type PPIase family. Tig subfamily.

It is found in the cytoplasm. The catalysed reaction is [protein]-peptidylproline (omega=180) = [protein]-peptidylproline (omega=0). Involved in protein export. Acts as a chaperone by maintaining the newly synthesized protein in an open conformation. Functions as a peptidyl-prolyl cis-trans isomerase. This Hahella chejuensis (strain KCTC 2396) protein is Trigger factor.